A 373-amino-acid chain; its full sequence is Homoserine O-acetyltransferase (373 aa).

Residues 52 to 356 (NVVMVLHALT…VYGHDGFLVE (305 aa)) form the AB hydrolase-1 domain. The active-site Nucleophile is Ser157. Residue Arg227 participates in substrate binding. Catalysis depends on residues Asp320 and His350. Asp351 lines the substrate pocket.

The protein belongs to the AB hydrolase superfamily. MetX family. In terms of assembly, homodimer.

It is found in the cytoplasm. It carries out the reaction L-homoserine + acetyl-CoA = O-acetyl-L-homoserine + CoA. The protein operates within amino-acid biosynthesis; L-methionine biosynthesis via de novo pathway; O-acetyl-L-homoserine from L-homoserine: step 1/1. Functionally, transfers an acetyl group from acetyl-CoA to L-homoserine, forming acetyl-L-homoserine. In Mycobacterium sp. (strain KMS), this protein is Homoserine O-acetyltransferase.